Here is a 314-residue protein sequence, read N- to C-terminus: MQITFLGTSSGVPTRSRNVSSVALRLPQRAEIWLFDCGEGTQHQLLRSELKSSQLRRIFITHMHGDHIFGLMGLLASCGLAGNTERIDIYGPAGLEEYLQACRRYSQTHFSYPIQVHTVQPGEVFSDQDYSVVCAPLKHRVPAFGYRIQECDRPGRFDTDKAISMGIPAGPLYGRLKRGERITLPDGRTFFGQDFCGPKEIGRKIAYCTDTIYCPEAVELSRDADVVIHESTFSHQEAELAYQRLHSTSTMAAQVAQAAGAKKLFLTHFSPRYAPNSATGLQELLTEASAIFPHTELAYDFLNYQVPRRTLTTA.

Residues His62, His64, Asp66, His67, His139, Asp210, and His268 each coordinate Zn(2+). The active-site Proton acceptor is Asp66.

Belongs to the RNase Z family. Homodimer. Zn(2+) is required as a cofactor.

It carries out the reaction Endonucleolytic cleavage of RNA, removing extra 3' nucleotides from tRNA precursor, generating 3' termini of tRNAs. A 3'-hydroxy group is left at the tRNA terminus and a 5'-phosphoryl group is left at the trailer molecule.. Functionally, zinc phosphodiesterase, which displays some tRNA 3'-processing endonuclease activity. Probably involved in tRNA maturation, by removing a 3'-trailer from precursor tRNA. The polypeptide is Ribonuclease Z (Acaryochloris marina (strain MBIC 11017)).